Here is a 143-residue protein sequence, read N- to C-terminus: Large ribosomal subunit protein uL11 (143 aa).

It belongs to the universal ribosomal protein uL11 family. In terms of assembly, part of the ribosomal stalk of the 50S ribosomal subunit. Interacts with L10 and the large rRNA to form the base of the stalk. L10 forms an elongated spine to which L12 dimers bind in a sequential fashion forming a multimeric L10(L12)X complex. One or more lysine residues are methylated.

Its function is as follows. Forms part of the ribosomal stalk which helps the ribosome interact with GTP-bound translation factors. The protein is Large ribosomal subunit protein uL11 of Koribacter versatilis (strain Ellin345).